Here is a 115-residue protein sequence, read N- to C-terminus: UPF0102 protein NMA0341 (115 aa).

It belongs to the UPF0102 family.

In Neisseria meningitidis serogroup A / serotype 4A (strain DSM 15465 / Z2491), this protein is UPF0102 protein NMA0341.